Here is a 99-residue protein sequence, read N- to C-terminus: Sm-like protein LSM7 (99 aa).

A Sm domain is found at 6–86 (ETVLDLAKFV…VMLVSPTDGT (81 aa)).

It belongs to the snRNP Sm proteins family. In terms of assembly, component of the heptameric LSM1-LSM7 complex that forms a seven-membered ring structure with a donut shape. The LSM subunits are arranged in the order LSM1, LSM2, LSM3, LSM6, LSM5, LSM7 and LSM4. Component of the heptameric LSM2-LSM8 complex that forms a seven-membered ring structure with a donut shape. The LSM subunits are arranged in the order LSM8, LSM2, LSM3, LSM6, LSM5, LSM7 and LSM4. LSM7 subunit interacts only with its two neighboring subunits, LSM5 and LSM4. In terms of tissue distribution, expressed in roots, leaves, stems, flowers and siliques.

Its subcellular location is the cytoplasm. The protein localises to the nucleus. Functionally, component of LSM protein complexes, which are involved in RNA processing. Component of the cytoplasmic LSM1-LSM7 complex which is involved in mRNA degradation by promoting decapping and leading to accurate 5'-3' mRNA decay. The cytoplasmic LSM1-LSM7 complex regulates developmental gene expression by the decapping of specific development-related transcripts. Component of the nuclear LSM2-LSM8 complex which is involved splicing nuclear mRNAs. LSM2-LSM8 binds directly to the U6 small nuclear RNAs (snRNAs) and is essential for accurate splicing of selected development-related mRNAs through the stabilization of the spliceosomal U6 snRNA. Plays a critical role in the regulation of development-related gene expression. The polypeptide is Sm-like protein LSM7 (Arabidopsis thaliana (Mouse-ear cress)).